The sequence spans 245 residues: tRNA pseudouridine synthase A (245 aa).

Catalysis depends on aspartate 52, which acts as the Nucleophile. Residue tyrosine 111 coordinates substrate.

This sequence belongs to the tRNA pseudouridine synthase TruA family. As to quaternary structure, homodimer.

It carries out the reaction uridine(38/39/40) in tRNA = pseudouridine(38/39/40) in tRNA. Formation of pseudouridine at positions 38, 39 and 40 in the anticodon stem and loop of transfer RNAs. This is tRNA pseudouridine synthase A from Ehrlichia canis (strain Jake).